The primary structure comprises 109 residues: MAPWMHLLTVLALLALWGPNSVQAYSSQHLCGSNLVEALYMTCGRSGFYRPHDRRELEDLQVEQAELGLEAGGLQPSALEMILQKRGIVDQCCNNICTFNQLQNYCNVP.

The N-terminal stretch at 1–24 is a signal peptide; sequence MAPWMHLLTVLALLALWGPNSVQA. Intrachain disulfides connect Cys-31–Cys-93, Cys-43–Cys-106, and Cys-92–Cys-97. Residues 56-84 constitute a propeptide, c peptide; the sequence is ELEDLQVEQAELGLEAGGLQPSALEMILQ.

The protein belongs to the insulin family. Heterodimer of a B chain and an A chain linked by two disulfide bonds.

Its subcellular location is the secreted. In terms of biological role, insulin decreases blood glucose concentration. It increases cell permeability to monosaccharides, amino acids and fatty acids. It accelerates glycolysis, the pentose phosphate cycle, and glycogen synthesis in liver. In Octodon degus (Degu), this protein is Insulin (INS).